Consider the following 706-residue polypeptide: Septin ring organizing protein mid2 (706 aa).

Disordered stretches follow at residues 62–102 (STAP…PFST) and 145–180 (DEAS…KKNP). 2 stretches are compositionally biased toward polar residues: residues 81-90 (YDQTLSNSSS) and 149-169 (NKSS…SNQG). Residue Ser-379 is modified to Phosphoserine. Positions 583-688 (TLLCDGYLCQ…WMSTLRQHLG (106 aa)) constitute a PH domain.

Belongs to the BUD4 family.

It is found in the cytoplasm. The protein localises to the cell cortex. Its subcellular location is the cytoskeleton. In terms of biological role, responsible for the proper stability and function of septins during cytokinesis. Required for the correct formation of the medial septin ring structure in mitosis and for the proper localization of endo-glucanases agn1 and eng1, which are needed for efficient cell separation. May act as a landmark for the localization of hydrolytic proteins to the medial region. The protein is Septin ring organizing protein mid2 (mid2) of Schizosaccharomyces pombe (strain 972 / ATCC 24843) (Fission yeast).